Reading from the N-terminus, the 143-residue chain is Phospholipase A2 isozymes PA3A/PA3B/PA5 (143 aa).

Ca(2+)-binding residues include Trp10, Gly12, and Gly14. 3 disulfides stabilise this stretch: Cys11–Cys33, Cys32–Cys72, and Cys39–Cys65. His36 is a catalytic residue. Asp37 contacts Ca(2+).

It belongs to the phospholipase A2 family. Group III subfamily. Ca(2+) serves as cofactor. As to expression, expressed by the venom gland.

It localises to the secreted. The enzyme catalyses a 1,2-diacyl-sn-glycero-3-phosphocholine + H2O = a 1-acyl-sn-glycero-3-phosphocholine + a fatty acid + H(+). Functionally, PLA2 catalyzes the calcium-dependent hydrolysis of the 2-acyl groups in 3-sn-phosphoglycerides. This chain is Phospholipase A2 isozymes PA3A/PA3B/PA5, found in Heloderma suspectum (Gila monster).